We begin with the raw amino-acid sequence, 32 residues long: Seminal plasma protein PDC-109 (32 aa).

The segment at aspartate 1–asparagine 32 is disordered. O-linked (GalNAc...) threonine glycosylation occurs at threonine 11. Residues histidine 19 to asparagine 32 form the Fibronectin type-II domain.

This sequence belongs to the seminal plasma protein family. In terms of assembly, homodimer.

It localises to the secreted. Functionally, could enhance the fertilizing capacity of bull spermatozoa upon interaction with heparin-like glycosaminoglycans present in the female genital tract. Exhibits both simulatory and inhibitory actions on the release of pituitary gonadotropins. Binds to heparin and gelatin. The chain is Seminal plasma protein PDC-109 from Bos indicus (Zebu).